The sequence spans 205 residues: Histidine biosynthesis bifunctional protein HisIE (205 aa).

Residues 1–116 (MLKLKFNEEG…KVEKPLPFEV (116 aa)) are phosphoribosyl-AMP cyclohydrolase. Positions 117 to 205 (LPRLQDVIRE…VMEELIRRFK (89 aa)) are phosphoribosyl-ATP pyrophosphohydrolase.

It in the N-terminal section; belongs to the PRA-CH family. In the C-terminal section; belongs to the PRA-PH family.

The protein localises to the cytoplasm. It carries out the reaction 1-(5-phospho-beta-D-ribosyl)-ATP + H2O = 1-(5-phospho-beta-D-ribosyl)-5'-AMP + diphosphate + H(+). It catalyses the reaction 1-(5-phospho-beta-D-ribosyl)-5'-AMP + H2O = 1-(5-phospho-beta-D-ribosyl)-5-[(5-phospho-beta-D-ribosylamino)methylideneamino]imidazole-4-carboxamide. It participates in amino-acid biosynthesis; L-histidine biosynthesis; L-histidine from 5-phospho-alpha-D-ribose 1-diphosphate: step 2/9. Its pathway is amino-acid biosynthesis; L-histidine biosynthesis; L-histidine from 5-phospho-alpha-D-ribose 1-diphosphate: step 3/9. This chain is Histidine biosynthesis bifunctional protein HisIE (hisI), found in Aquifex aeolicus (strain VF5).